The following is a 194-amino-acid chain: Imidazoleglycerol-phosphate dehydratase (194 aa).

This sequence belongs to the imidazoleglycerol-phosphate dehydratase family.

It localises to the cytoplasm. The catalysed reaction is D-erythro-1-(imidazol-4-yl)glycerol 3-phosphate = 3-(imidazol-4-yl)-2-oxopropyl phosphate + H2O. The protein operates within amino-acid biosynthesis; L-histidine biosynthesis; L-histidine from 5-phospho-alpha-D-ribose 1-diphosphate: step 6/9. In Oceanobacillus iheyensis (strain DSM 14371 / CIP 107618 / JCM 11309 / KCTC 3954 / HTE831), this protein is Imidazoleglycerol-phosphate dehydratase.